Reading from the N-terminus, the 254-residue chain is Phosphate import ATP-binding protein PstB (254 aa).

One can recognise an ABC transporter domain in the interval 9-249 (MSVKDLDLFY…PVDKRTEDYI (241 aa)). 41–48 (GPSGCGKS) contacts ATP.

Belongs to the ABC transporter superfamily. Phosphate importer (TC 3.A.1.7) family. The complex is composed of two ATP-binding proteins (PstB), two transmembrane proteins (PstC and PstA) and a solute-binding protein (PstS).

Its subcellular location is the cell membrane. The catalysed reaction is phosphate(out) + ATP + H2O = ADP + 2 phosphate(in) + H(+). In terms of biological role, part of the ABC transporter complex PstSACB involved in phosphate import. Responsible for energy coupling to the transport system. In Clostridioides difficile (strain 630) (Peptoclostridium difficile), this protein is Phosphate import ATP-binding protein PstB.